A 484-amino-acid chain; its full sequence is Ribosome biogenesis protein YTM1 (484 aa).

Residues 11 to 94 are ubiquitin-like (UBL) domain; that stretch reads VKVLFTTTEQ…EKTVTLQYVR (84 aa). 7 WD repeats span residues 121–160, 166–204, 215–254, 289–329, 331–372, 378–418, and 448–484; these read SSAG…LATS, GPLC…DHFS, GHRS…APEA, VHSR…VVST, TTSN…AATS, GHIN…PAAG, and GEGV…IISS.

Belongs to the WD repeat WDR12/YTM1 family. As to quaternary structure, component of the NOP7 complex, composed of ERB1, NOP7 and YTM1. The complex is held together by ERB1, which interacts with NOP7 via its N-terminal domain and with YTM1 via a high-affinity interaction between the seven-bladed beta-propeller domains of the 2 proteins. The NOP7 complex associates with the 66S pre-ribosome. Interacts (via UBL domain) with MDN1 (via VWFA/MIDAS domain).

The protein resides in the nucleus. The protein localises to the nucleolus. Its subcellular location is the nucleoplasm. Functionally, component of the NOP7 complex, which is required for maturation of the 25S and 5.8S ribosomal RNAs and formation of the 60S ribosome. The chain is Ribosome biogenesis protein YTM1 from Pyricularia oryzae (strain 70-15 / ATCC MYA-4617 / FGSC 8958) (Rice blast fungus).